A 37-amino-acid polypeptide reads, in one-letter code: Toxin Bcg III 28.78 (37 aa).

Cys6 and Cys31 are joined by a disulfide.

The protein resides in the secreted. Its subcellular location is the nematocyst. The sequence is that of Toxin Bcg III 28.78 from Bunodosoma cangicum (Sea anemone).